The following is a 199-amino-acid chain: FMN-dependent NADH:quinone oxidoreductase (199 aa).

FMN is bound by residues 17–19 and 87–90; these read SNS and MYNF.

It belongs to the azoreductase type 1 family. In terms of assembly, homodimer. FMN is required as a cofactor.

It carries out the reaction 2 a quinone + NADH + H(+) = 2 a 1,4-benzosemiquinone + NAD(+). The catalysed reaction is N,N-dimethyl-1,4-phenylenediamine + anthranilate + 2 NAD(+) = 2-(4-dimethylaminophenyl)diazenylbenzoate + 2 NADH + 2 H(+). Quinone reductase that provides resistance to thiol-specific stress caused by electrophilic quinones. Functionally, also exhibits azoreductase activity. Catalyzes the reductive cleavage of the azo bond in aromatic azo compounds to the corresponding amines. The sequence is that of FMN-dependent NADH:quinone oxidoreductase from Mycoplasma mycoides subsp. mycoides SC (strain CCUG 32753 / NCTC 10114 / PG1).